A 319-amino-acid polypeptide reads, in one-letter code: Acetyl-coenzyme A carboxylase carboxyl transferase subunit alpha (319 aa).

A CoA carboxyltransferase C-terminal domain is found at 35-296 (NIDEEVHRLR…KAQLLEDLAD (262 aa)).

Belongs to the AccA family. As to quaternary structure, acetyl-CoA carboxylase is a heterohexamer composed of biotin carboxyl carrier protein (AccB), biotin carboxylase (AccC) and two subunits each of ACCase subunit alpha (AccA) and ACCase subunit beta (AccD).

The protein localises to the cytoplasm. It catalyses the reaction N(6)-carboxybiotinyl-L-lysyl-[protein] + acetyl-CoA = N(6)-biotinyl-L-lysyl-[protein] + malonyl-CoA. It participates in lipid metabolism; malonyl-CoA biosynthesis; malonyl-CoA from acetyl-CoA: step 1/1. Component of the acetyl coenzyme A carboxylase (ACC) complex. First, biotin carboxylase catalyzes the carboxylation of biotin on its carrier protein (BCCP) and then the CO(2) group is transferred by the carboxyltransferase to acetyl-CoA to form malonyl-CoA. The protein is Acetyl-coenzyme A carboxylase carboxyl transferase subunit alpha of Salmonella paratyphi C (strain RKS4594).